The following is a 527-amino-acid chain: EGF domain-specific O-linked N-acetylglucosamine transferase (527 aa).

The signal sequence occupies residues 1–19 (MLMLLVFGVLLHEVPLSGQ). Residues 295 to 297 (DYD) carry the Required for optimal activity motif. Asparagine 354 is a glycosylation site (N-linked (GlcNAc...) asparagine). The short motif at 524-527 (HDEL) is the Prevents secretion from ER element.

Belongs to the glycosyltransferase 61 family. As to expression, widely expressed. Expressed in brain, heart, kidney, lung, skeletal muscles and thymus. Highest expression is observed in lung and the lowest in skeletal muscles.

Its subcellular location is the endoplasmic reticulum lumen. The enzyme catalyses L-seryl-[protein] + UDP-N-acetyl-alpha-D-glucosamine = 3-O-(N-acetyl-beta-D-glucosaminyl)-L-seryl-[protein] + UDP + H(+). The catalysed reaction is L-threonyl-[protein] + UDP-N-acetyl-alpha-D-glucosamine = 3-O-(N-acetyl-beta-D-glucosaminyl)-L-threonyl-[protein] + UDP + H(+). Its function is as follows. Catalyzes the transfer of a single N-acetylglucosamine from UDP-GlcNAc to a serine or threonine residue in extracellular proteins resulting in their modification with a beta-linked N-acetylglucosamine (O-GlcNAc). Specifically glycosylates the Thr residue located between the fifth and sixth conserved cysteines of folded EGF-like domains. The chain is EGF domain-specific O-linked N-acetylglucosamine transferase (Eogt) from Mus musculus (Mouse).